Reading from the N-terminus, the 240-residue chain is PF03932 family protein CutC (240 aa).

The protein belongs to the CutC family.

The protein resides in the cytoplasm. In Xanthomonas campestris pv. campestris (strain B100), this protein is PF03932 family protein CutC.